A 148-amino-acid chain; its full sequence is Snaclec B3/B5 (148 aa).

The first 24 residues, 1 to 24 (MGRFIFVSFGLLVVFLSLSGTGAA), serve as a signal peptide directing secretion. 3 disulfide bridges follow: Cys27-Cys38, Cys55-Cys144, and Cys121-Cys136. Residues 34–145 (YDQHCYKVFD…CRLLGHFVCK (112 aa)) form the C-type lectin domain.

It belongs to the snaclec family. Heterodimer; disulfide-linked. In terms of tissue distribution, expressed by the venom gland.

The protein localises to the secreted. Its function is as follows. Interferes with one step of hemostasis (modulation of platelet aggregation, or coagulation cascade, for example). This is Snaclec B3/B5 from Macrovipera lebetinus (Levantine viper).